The chain runs to 318 residues: Ficolin-1-B (318 aa).

An N-terminal signal peptide occupies residues 1–19 (MTRWVQTFLLLVAVIRSYA). The 58-residue stretch at 42–99 (GCPGIPGVPGPQGPSGPAGAKGEKGFPGIPGKMGPTGLKGERGISGPKGQKGDKGDPG) folds into the Collagen-like domain. Positions 100 to 318 (IPVVGMAQNC…VSEIKFRPQP (219 aa)) constitute a Fibrinogen C-terminal domain. An intrachain disulfide couples Cys-109 to Cys-137. Asn-205 and Asn-222 each carry an N-linked (GlcNAc...) asparagine glycan. Residue Asp-253 participates in Ca(2+) binding. Asn-254 carries an N-linked (GlcNAc...) asparagine glycan. Residues Asp-255 and Ser-257 each contribute to the Ca(2+) site. Cys-261 and Cys-274 are disulfide-bonded. Position 273-275 (273-275 (SCH)) interacts with a carbohydrate. Residue Asn-287 is glycosylated (N-linked (GlcNAc...) asparagine).

The protein belongs to the ficolin lectin family. Homotrimer. May form higher-order oligomers. N-glycosylated. In terms of tissue distribution, expressed in peripheral blood leukocytes. Also detected at lower levels in spleen and lung.

The protein resides in the secreted. Its function is as follows. May function in innate immunity through activation of the lectin complement pathway. Binds to GalNAc and GlcNAc carbohydrate moieties. The polypeptide is Ficolin-1-B (Xenopus laevis (African clawed frog)).